Consider the following 379-residue polypeptide: MSKRDFYEVLGVSRDASERDIKKAYKRLAMKFHPDRNQGDDTAAEKFKEVKVAYEILTDAQKRSAYDQYGHAAFEQGGMGGGGFGGGGADFGDIFGDVFGDIFGGGRRGGQQRAQRGSDLRYNMELTLEEAGRGCDKEIEVPTLVSCDPCEGTGAKKGTSSTTCSTCHGQGQVQMRQGFFAVQQACPTCHGKGKIIKDPCNSCHGEGRVHKTKTLNVKIPSGVDTGDRIRLSGEGEAGEHGAPAGDLYVQVHVKEHNIFERDGNNLYCEVPVSFTMAALGGEVEVPTLDGRVSLKVPLETQTGRMFRMRGKGVKGVRTHSAGDLIVKLIVETPVKLTKRQKELLQEFQESFDGKDAKKHNPKSEGFLSGVKNFFDDLTK.

In terms of domain architecture, J spans 5–70 (DFYEVLGVSR…QKRSAYDQYG (66 aa)). Residues 134–212 (GCDKEIEVPT…CHGEGRVHKT (79 aa)) form a CR-type zinc finger. Residues Cys147, Cys150, Cys164, Cys167, Cys186, Cys189, Cys200, and Cys203 each contribute to the Zn(2+) site. 4 CXXCXGXG motif repeats span residues 147–154 (CDPCEGTG), 164–171 (CSTCHGQG), 186–193 (CPTCHGKG), and 200–207 (CNSCHGEG).

Belongs to the DnaJ family. As to quaternary structure, homodimer. The cofactor is Zn(2+).

The protein resides in the cytoplasm. In terms of biological role, participates actively in the response to hyperosmotic and heat shock by preventing the aggregation of stress-denatured proteins and by disaggregating proteins, also in an autonomous, DnaK-independent fashion. Unfolded proteins bind initially to DnaJ; upon interaction with the DnaJ-bound protein, DnaK hydrolyzes its bound ATP, resulting in the formation of a stable complex. GrpE releases ADP from DnaK; ATP binding to DnaK triggers the release of the substrate protein, thus completing the reaction cycle. Several rounds of ATP-dependent interactions between DnaJ, DnaK and GrpE are required for fully efficient folding. Also involved, together with DnaK and GrpE, in the DNA replication of plasmids through activation of initiation proteins. This chain is Chaperone protein DnaJ, found in Aliivibrio fischeri (strain ATCC 700601 / ES114) (Vibrio fischeri).